The following is a 290-amino-acid chain: Shikimate dehydrogenase (NADP(+)) (290 aa).

Residues 20–22 (SLS) and Thr-67 each bind shikimate. Residue Lys-71 is the Proton acceptor of the active site. The shikimate site is built by Asn-92 and Asp-107. NADP(+) is bound by residues 132–136 (GAGGA) and Met-228. Tyr-230 contacts shikimate. Gly-251 provides a ligand contact to NADP(+).

The protein belongs to the shikimate dehydrogenase family. Homodimer.

The catalysed reaction is shikimate + NADP(+) = 3-dehydroshikimate + NADPH + H(+). It participates in metabolic intermediate biosynthesis; chorismate biosynthesis; chorismate from D-erythrose 4-phosphate and phosphoenolpyruvate: step 4/7. Involved in the biosynthesis of the chorismate, which leads to the biosynthesis of aromatic amino acids. Catalyzes the reversible NADPH linked reduction of 3-dehydroshikimate (DHSA) to yield shikimate (SA). The polypeptide is Shikimate dehydrogenase (NADP(+)) (Citrifermentans bemidjiense (strain ATCC BAA-1014 / DSM 16622 / JCM 12645 / Bem) (Geobacter bemidjiensis)).